Reading from the N-terminus, the 906-residue chain is MVSFGGLARKIFGSSNDRRVKTLRQRAEQITALEKNYENLTDEQLQAKTAEFRAALAEGKSLDSLLPDAFATAREAAKRVLGMRPFDVQLIGGMVLHERGIAEMRTGEGKTLMATLPVYLNALEGKGVHVVTVNDYLATRDAETMGRLYNFLGLTVGVIKHGLDDDERRAAYACDITYGTNNELGFDYLRDNMKYERAQMVQRPHNYAIVDEVDSILIDEARTPLIISGPLEDRSDFYNLIDTFIPPLAEEDYEVDEKQKTAIFTEVGTEKVEKLLEAAGHLKGESLYDIENVAVVHHLNNALRAHKLFQRDKDYIVRNDEIVIIDEFTGRMMPGRRYSEGLHQALEAKEHVTIQPENQTLASITFQNYFRMYNKLSGMTGTAATEAEEFGNIYGLEVLEIPTNLPVQRIDEDDEVYRTVEEKYRAIVRDIRASHEKGQPILVGTTSIEKSEQLAERLRREGIKGFQVLNARYHEQEAYIIAQAGVPGAVTIATNMAGRGTDIQLGGNLEMRVRQELSDVPEGPEREEKIAAIKADIAQLKEKALAAGGLYVLATERHESRRIDNQLRGRSGRQGDPGRSKFFLSLQDDLMRIFGSDRMDGMLQKLGLKEDEAIVHPWINKALEKAQKKVEARNFEIRKNLLKYDDVMNDQRKVIFEQRLEMMDEEDLTETVAEMRHEVIEDMVILRIPKDAYAEKWDIAGLKQDIASKLNLDLPVEEWAKEEGIAEEEFENRIKEAADKAAAEKAERFGPQIMTYVEKSVIMQSLDNLWREHLVNLDHLRSVVGFRGYAQRDPLNEYKTEAFELFQTMLANLREVVISQLMRVEIVGEAPPEPQLPPMAGLHIDGTTGENDFDEAIWAEHQHDDRIVPPAQRDPADPRTWGKVSRNEPCPCGSGKKYKHCHGAFE.

Residues Gln-89, 107 to 111 (GEGKT), and Asp-502 each bind ATP. 4 residues coordinate Zn(2+): Cys-890, Cys-892, Cys-901, and His-902.

It belongs to the SecA family. As to quaternary structure, monomer and homodimer. Part of the essential Sec protein translocation apparatus which comprises SecA, SecYEG and auxiliary proteins SecDF-YajC and YidC. Zn(2+) is required as a cofactor.

Its subcellular location is the cell inner membrane. The protein resides in the cytoplasm. The catalysed reaction is ATP + H2O + cellular proteinSide 1 = ADP + phosphate + cellular proteinSide 2.. Part of the Sec protein translocase complex. Interacts with the SecYEG preprotein conducting channel. Has a central role in coupling the hydrolysis of ATP to the transfer of proteins into and across the cell membrane, serving both as a receptor for the preprotein-SecB complex and as an ATP-driven molecular motor driving the stepwise translocation of polypeptide chains across the membrane. The polypeptide is Protein translocase subunit SecA (Brucella canis (strain ATCC 23365 / NCTC 10854 / RM-666)).